A 166-amino-acid chain; its full sequence is Endoribonuclease YbeY (166 aa).

Residues H136, H140, and H146 each coordinate Zn(2+).

It belongs to the endoribonuclease YbeY family. It depends on Zn(2+) as a cofactor.

It localises to the cytoplasm. Single strand-specific metallo-endoribonuclease involved in late-stage 70S ribosome quality control and in maturation of the 3' terminus of the 16S rRNA. The protein is Endoribonuclease YbeY of Synechococcus sp. (strain CC9605).